Consider the following 299-residue polypeptide: GTPase Era (299 aa).

An Era-type G domain is found at 4 to 171; the sequence is KSGFVAILGR…VDILSENLEE (168 aa). The G1 stretch occupies residues 12–19; sequence GRPNVGKS. 12–19 lines the GTP pocket; the sequence is GRPNVGKS. The tract at residues 38–42 is G2; sequence QTTRN. The segment at 59–62 is G3; it reads DTPG. GTP-binding positions include 59–63 and 121–124; these read DTPGI and NKID. Residues 121-124 are G4; the sequence is NKID. Positions 150-152 are G5; it reads ISA. The KH type-2 domain occupies 202-280; it reads TREEIPHSVA…FLETWVKVKK (79 aa).

This sequence belongs to the TRAFAC class TrmE-Era-EngA-EngB-Septin-like GTPase superfamily. Era GTPase family. In terms of assembly, monomer.

It localises to the cytoplasm. It is found in the cell membrane. Its function is as follows. An essential GTPase that binds both GDP and GTP, with rapid nucleotide exchange. Plays a role in 16S rRNA processing and 30S ribosomal subunit biogenesis and possibly also in cell cycle regulation and energy metabolism. This chain is GTPase Era, found in Streptococcus gordonii (strain Challis / ATCC 35105 / BCRC 15272 / CH1 / DL1 / V288).